The primary structure comprises 169 residues: S-ribosylhomocysteine lyase (169 aa).

Fe cation-binding residues include histidine 54, histidine 58, and cysteine 128.

It belongs to the LuxS family. Homodimer. The cofactor is Fe cation.

The catalysed reaction is S-(5-deoxy-D-ribos-5-yl)-L-homocysteine = (S)-4,5-dihydroxypentane-2,3-dione + L-homocysteine. Its function is as follows. Involved in the synthesis of autoinducer 2 (AI-2) which is secreted by bacteria and is used to communicate both the cell density and the metabolic potential of the environment. The regulation of gene expression in response to changes in cell density is called quorum sensing. Catalyzes the transformation of S-ribosylhomocysteine (RHC) to homocysteine (HC) and 4,5-dihydroxy-2,3-pentadione (DPD). This Shewanella putrefaciens (strain CN-32 / ATCC BAA-453) protein is S-ribosylhomocysteine lyase.